The primary structure comprises 120 residues: Large ribosomal subunit protein bL17 (120 aa).

The protein belongs to the bacterial ribosomal protein bL17 family. As to quaternary structure, part of the 50S ribosomal subunit. Contacts protein L32.

The chain is Large ribosomal subunit protein bL17 from Geobacillus kaustophilus (strain HTA426).